The sequence spans 506 residues: MKEYQVYLERARSRQQDFLYPLIFREYIYGLAYSHNWSRSIFLENGGYDNKYSLLNVKRLITRMYQQNHLIISANDSPKNGFWGYNKNFDSQIISEGFAIVVEIPFFLQLSSSLEKAEIIKSYKNVRSIHSIFPFLEDKFTYLNYVSDIRIPYPIHLEILVQILRYWVKDAPFFHLLRLFLYHFSNWNGFITTKKSISTFSKSNPRLFLFLYNFYVCEYESIFLFLRNKSSHLRLKSFSVFLERIFFYAKREHLVEVFAKDFSYPLPFFKDPNIHYVRYQGKCILASKNVPFLMNKWKHYFIHLWQCFFDVWSQPRTININQLSEHSFQLLGYFSNVRLNRSVVRSQMLQNTFLIEIVSKKLDIIVPIIPLIRSLAKAKFCNVLGHPISKPVRADSSDFDIIERFLRICRNLSHYYNGSSKKKNLYRIKYILRLSCIKTLACKHKSTVRAFLKRSGSEELLEEFFTEEEEILSLIFPRDSFTLHRFYRNRIWYLDILFSNDLVNDE.

The protein belongs to the intron maturase 2 family. MatK subfamily.

The protein localises to the plastid. The protein resides in the chloroplast. Its function is as follows. Usually encoded in the trnK tRNA gene intron. Probably assists in splicing its own and other chloroplast group II introns. This Trifolium incarnatum (Crimson clover) protein is Maturase K.